The sequence spans 412 residues: Peptidase T (412 aa).

Histidine 81 is a binding site for Zn(2+). Aspartate 83 is an active-site residue. Aspartate 144 contributes to the Zn(2+) binding site. The active-site Proton acceptor is the glutamate 178. Residues glutamate 179, aspartate 201, and histidine 383 each coordinate Zn(2+).

This sequence belongs to the peptidase M20B family. Zn(2+) serves as cofactor.

It localises to the cytoplasm. It carries out the reaction Release of the N-terminal residue from a tripeptide.. Functionally, cleaves the N-terminal amino acid of tripeptides. In Bacillus cereus (strain ZK / E33L), this protein is Peptidase T.